A 66-amino-acid chain; its full sequence is Alpha-like toxin BmK-M7 (66 aa).

The 63-residue stretch at 2 to 64 folds into the LCN-type CS-alpha/beta domain; sequence RDGYIALPHN…VPIRVPGRCH (63 aa). 4 disulfide bridges follow: Cys-12–Cys-63, Cys-16–Cys-36, Cys-22–Cys-46, and Cys-26–Cys-48.

The protein belongs to the long (4 C-C) scorpion toxin superfamily. Sodium channel inhibitor family. Alpha subfamily. As to expression, expressed by the venom gland.

It localises to the secreted. Functionally, alpha toxins bind voltage-independently at site-3 of sodium channels (Nav) and inhibit the inactivation of the activated channels, thereby blocking neuronal transmission. This toxin is active on both mammals and insects. It can be considered as a cardiotoxin, as it can bind to human cardiac sodium channel and modify its normal properties. The polypeptide is Alpha-like toxin BmK-M7 (Olivierus martensii (Manchurian scorpion)).